Consider the following 99-residue polypeptide: Large ribosomal subunit protein eL21 (99 aa).

This sequence belongs to the eukaryotic ribosomal protein eL21 family.

The protein is Large ribosomal subunit protein eL21 of Methanocella arvoryzae (strain DSM 22066 / NBRC 105507 / MRE50).